The sequence spans 543 residues: Probable protein kinase UbiB (543 aa).

Residues 123–501 (DFDQQALASA…RVRQGQSRYL (379 aa)) enclose the Protein kinase domain. ATP-binding positions include 129 to 137 (LASASIAQV) and K152. The active-site Proton acceptor is D287. The next 2 membrane-spanning stretches (helical) occupy residues 498–518 (SRYL…LLSG) and 519–539 (DVEV…VIGW).

This sequence belongs to the ABC1 family. UbiB subfamily.

The protein localises to the cell inner membrane. The protein operates within cofactor biosynthesis; ubiquinone biosynthesis [regulation]. In terms of biological role, is probably a protein kinase regulator of UbiI activity which is involved in aerobic coenzyme Q (ubiquinone) biosynthesis. The protein is Probable protein kinase UbiB of Serratia proteamaculans (strain 568).